The chain runs to 197 residues: ATP-dependent Clp protease proteolytic subunit 2 (197 aa).

Ser-101 serves as the catalytic Nucleophile. His-126 is a catalytic residue.

This sequence belongs to the peptidase S14 family. Fourteen ClpP subunits assemble into 2 heptameric rings which stack back to back to give a disk-like structure with a central cavity, resembling the structure of eukaryotic proteasomes.

The protein resides in the cytoplasm. The enzyme catalyses Hydrolysis of proteins to small peptides in the presence of ATP and magnesium. alpha-casein is the usual test substrate. In the absence of ATP, only oligopeptides shorter than five residues are hydrolyzed (such as succinyl-Leu-Tyr-|-NHMec, and Leu-Tyr-Leu-|-Tyr-Trp, in which cleavage of the -Tyr-|-Leu- and -Tyr-|-Trp bonds also occurs).. Cleaves peptides in various proteins in a process that requires ATP hydrolysis. Has a chymotrypsin-like activity. Plays a major role in the degradation of misfolded proteins. The protein is ATP-dependent Clp protease proteolytic subunit 2 of Trichormus variabilis (strain ATCC 29413 / PCC 7937) (Anabaena variabilis).